The sequence spans 145 residues: Ribonuclease VapC24 (145 aa).

The PINc domain occupies 4–123 (IDTNILLYAQ…RHHGVDEFAT (120 aa)). 2 residues coordinate Mg(2+): D5 and D106.

This sequence belongs to the PINc/VapC protein family. Mg(2+) serves as cofactor.

Functionally, toxic component of a type II toxin-antitoxin (TA) system. An RNase. Its cognate antitoxin is VapB24. In Mycobacterium tuberculosis (strain CDC 1551 / Oshkosh), this protein is Ribonuclease VapC24.